The following is a 343-amino-acid chain: Tetraacyldisaccharide 4'-kinase (343 aa).

53-60 contacts ATP; the sequence is TCGGAGKT.

This sequence belongs to the LpxK family.

The catalysed reaction is a lipid A disaccharide + ATP = a lipid IVA + ADP + H(+). Its pathway is glycolipid biosynthesis; lipid IV(A) biosynthesis; lipid IV(A) from (3R)-3-hydroxytetradecanoyl-[acyl-carrier-protein] and UDP-N-acetyl-alpha-D-glucosamine: step 6/6. Its function is as follows. Transfers the gamma-phosphate of ATP to the 4'-position of a tetraacyldisaccharide 1-phosphate intermediate (termed DS-1-P) to form tetraacyldisaccharide 1,4'-bis-phosphate (lipid IVA). This chain is Tetraacyldisaccharide 4'-kinase, found in Bartonella quintana (strain Toulouse) (Rochalimaea quintana).